Consider the following 285-residue polypeptide: MKIAIPNKGRLQGPALQFLNSVGIKPMANDDRALMVPTSWEGVQLVTIRTEDIPNIVETGAVDLGITGLDYVMESGADVEELVKLDFGKSRLVLAVPMSWNIEDPRDMPKNVRIATKYHNIARAYLERKGIEARLVKISGAAEIMPSLGAADAIIDVTSTGTTLKLHGLKPIDVVSESYAMVIGNKNWMKSEEADRINLVLTMMKGALSARGKKMIFMNVDDVNLEAVVSSLPAMLAPAVSKLSNSNAWEVVTVTDEEMLPEVIAKAKTAGARDIVVVNIEKVIK.

The protein belongs to the ATP phosphoribosyltransferase family. Long subfamily. The cofactor is Mg(2+).

The protein localises to the cytoplasm. It carries out the reaction 1-(5-phospho-beta-D-ribosyl)-ATP + diphosphate = 5-phospho-alpha-D-ribose 1-diphosphate + ATP. Its pathway is amino-acid biosynthesis; L-histidine biosynthesis; L-histidine from 5-phospho-alpha-D-ribose 1-diphosphate: step 1/9. Feedback inhibited by histidine. Functionally, catalyzes the condensation of ATP and 5-phosphoribose 1-diphosphate to form N'-(5'-phosphoribosyl)-ATP (PR-ATP). Has a crucial role in the pathway because the rate of histidine biosynthesis seems to be controlled primarily by regulation of HisG enzymatic activity. This chain is ATP phosphoribosyltransferase, found in Metallosphaera sedula (strain ATCC 51363 / DSM 5348 / JCM 9185 / NBRC 15509 / TH2).